The following is a 78-amino-acid chain: Large ribosomal subunit protein bL28 (78 aa).

The protein belongs to the bacterial ribosomal protein bL28 family.

The chain is Large ribosomal subunit protein bL28 from Edwardsiella ictaluri (strain 93-146).